The following is a 459-amino-acid chain: MNRLPSSASALACSAHALNLIEKRTLDHEEMKALNREVIEYFKEHVNPGFLEYRKSVTAGGDYGAVEWQAGGLNTLVDTQGQEFIDCLGGFGIFNVGHRNPVVVSAVQNQLAKQPLHSQELLDPLRAMLAKTLAALTPGKLKYSFFCNSGTESVEAALKLAKAYQSPRGKFTFIATSGVFHGKSLGALSATAKSTFRKPFMPLLPGFRHVPFGNIEAMRTALNECKKTGDDVAAVILEPIQGEGGVILPPPGYLTAVRKLCDEFGALMILDEVQTGMGRTGKMFACEHENVQPDILCLAKALGGGVMPIGATIATEEVFSVLFDNPFLHTTTFGGNPLACAAALATINVLLEQNLPAQAEQKGDMLLDGFRQLAREYPDLVQEARGKGMLMAIEFVDNEIGYNFASEMFRQRVLVAGTLNNAKTIRIEPPLTLTIEQCELVIKAARKALAAMRVSVEEA.

Pyridoxal 5'-phosphate-binding positions include 150–151 (GT) and Gln-274. Position 300 is an N6-(pyridoxal phosphate)lysine (Lys-300). Residue Thr-332 coordinates pyridoxal 5'-phosphate.

The protein belongs to the class-III pyridoxal-phosphate-dependent aminotransferase family. Putrescine aminotransferase subfamily. Pyridoxal 5'-phosphate is required as a cofactor.

The enzyme catalyses an alkane-alpha,omega-diamine + 2-oxoglutarate = an omega-aminoaldehyde + L-glutamate. It carries out the reaction putrescine + 2-oxoglutarate = 1-pyrroline + L-glutamate + H2O. The catalysed reaction is cadaverine + 2-oxoglutarate = 5-aminopentanal + L-glutamate. The protein operates within amine and polyamine degradation; putrescine degradation; 4-aminobutanal from putrescine (transaminase route): step 1/1. Catalyzes the aminotransferase reaction from putrescine to 2-oxoglutarate, leading to glutamate and 4-aminobutanal, which spontaneously cyclizes to form 1-pyrroline. This is the first step in one of two pathways for putrescine degradation, where putrescine is converted into 4-aminobutanoate (gamma-aminobutyrate or GABA) via 4-aminobutanal. Also functions as a cadaverine transaminase in a a L-lysine degradation pathway to succinate that proceeds via cadaverine, glutarate and L-2-hydroxyglutarate. The sequence is that of Putrescine aminotransferase from Shigella flexneri serotype 5b (strain 8401).